Consider the following 100-residue polypeptide: Small ribosomal subunit protein uS14c (100 aa).

It belongs to the universal ribosomal protein uS14 family. In terms of assembly, part of the 30S ribosomal subunit.

The protein localises to the plastid. Its subcellular location is the chloroplast. Functionally, binds 16S rRNA, required for the assembly of 30S particles. In Cycas taitungensis (Prince sago), this protein is Small ribosomal subunit protein uS14c.